The following is a 388-amino-acid chain: Flap endonuclease 1 (388 aa).

The tract at residues 1–104 (MGILGLSKLI…GELAKRAERR (104 aa)) is N-domain. Asp-34 is a binding site for Mg(2+). Positions 47 and 70 each coordinate DNA. 5 residues coordinate Mg(2+): Asp-86, Glu-158, Glu-160, Asp-179, and Asp-181. An I-domain region spans residues 122–253 (EIEKFNRRLV…KRAIELINSY (132 aa)). Glu-158 lines the DNA pocket. Positions 231 and 233 each coordinate DNA. Asp-233 is a Mg(2+) binding site. The tract at residues 336-344 (TQVRLDSFF) is interaction with PCNA. The segment at 355–388 (AAAKRKAEEAKKSANNKKAKIGGGGGAGRGRRPK) is disordered.

This sequence belongs to the XPG/RAD2 endonuclease family. FEN1 subfamily. In terms of assembly, interacts with PCNA. Three molecules of FEN1 bind to one PCNA trimer with each molecule binding to one PCNA monomer. PCNA stimulates the nuclease activity without altering cleavage specificity. It depends on Mg(2+) as a cofactor. In terms of processing, phosphorylated. Phosphorylation upon DNA damage induces relocalization to the nuclear plasma.

It localises to the nucleus. Its subcellular location is the nucleolus. The protein localises to the nucleoplasm. The protein resides in the mitochondrion. Functionally, structure-specific nuclease with 5'-flap endonuclease and 5'-3' exonuclease activities involved in DNA replication and repair. During DNA replication, cleaves the 5'-overhanging flap structure that is generated by displacement synthesis when DNA polymerase encounters the 5'-end of a downstream Okazaki fragment. It enters the flap from the 5'-end and then tracks to cleave the flap base, leaving a nick for ligation. Also involved in the long patch base excision repair (LP-BER) pathway, by cleaving within the apurinic/apyrimidinic (AP) site-terminated flap. Acts as a genome stabilization factor that prevents flaps from equilibrating into structures that lead to duplications and deletions. Also possesses 5'-3' exonuclease activity on nicked or gapped double-stranded DNA, and exhibits RNase H activity. Also involved in replication and repair of rDNA and in repairing mitochondrial DNA. In Drosophila willistoni (Fruit fly), this protein is Flap endonuclease 1.